The sequence spans 369 residues: Aminomethyltransferase (369 aa).

Belongs to the GcvT family. As to quaternary structure, the glycine cleavage system is composed of four proteins: P, T, L and H.

The catalysed reaction is N(6)-[(R)-S(8)-aminomethyldihydrolipoyl]-L-lysyl-[protein] + (6S)-5,6,7,8-tetrahydrofolate = N(6)-[(R)-dihydrolipoyl]-L-lysyl-[protein] + (6R)-5,10-methylene-5,6,7,8-tetrahydrofolate + NH4(+). Its function is as follows. The glycine cleavage system catalyzes the degradation of glycine. The protein is Aminomethyltransferase of Xanthomonas euvesicatoria pv. vesicatoria (strain 85-10) (Xanthomonas campestris pv. vesicatoria).